Here is a 247-residue protein sequence, read N- to C-terminus: Carboxy-S-adenosyl-L-methionine synthase (247 aa).

S-adenosyl-L-methionine-binding positions include Y39, G64 to S66, D89 to N90, D117 to I118, N132, and R199.

The protein belongs to the class I-like SAM-binding methyltransferase superfamily. Cx-SAM synthase family. Homodimer.

It carries out the reaction prephenate + S-adenosyl-L-methionine = carboxy-S-adenosyl-L-methionine + 3-phenylpyruvate + H2O. Functionally, catalyzes the conversion of S-adenosyl-L-methionine (SAM) to carboxy-S-adenosyl-L-methionine (Cx-SAM). The polypeptide is Carboxy-S-adenosyl-L-methionine synthase (Salmonella arizonae (strain ATCC BAA-731 / CDC346-86 / RSK2980)).